A 347-amino-acid chain; its full sequence is Protease HtpX homolog (347 aa).

The next 3 membrane-spanning stretches (helical) occupy residues 8 to 28 (IAFG…VVIA), 46 to 66 (ALTA…IAIV), and 76 to 96 (WGFI…TYIA). His174 is a binding site for Zn(2+). Glu175 is a catalytic residue. His178 lines the Zn(2+) pocket. Transmembrane regions (helical) follow at residues 185–205 (ALML…VSSV) and 221–241 (LLAA…LLVL). Position 248 (Glu248) interacts with Zn(2+).

It belongs to the peptidase M48B family. It depends on Zn(2+) as a cofactor.

It is found in the cell membrane. In Pyrobaculum islandicum (strain DSM 4184 / JCM 9189 / GEO3), this protein is Protease HtpX homolog.